The following is a 59-amino-acid chain: Photosystem II reaction center protein K (59 aa).

Residues 1–22 (MLNIFSLICLSSALHSSSFFFA) constitute a propeptide that is removed on maturation. A helical transmembrane segment spans residues 38 to 58 (MPVIPVLFFLLALVWQAAVSF).

It belongs to the PsbK family. In terms of assembly, PSII is composed of 1 copy each of membrane proteins PsbA, PsbB, PsbC, PsbD, PsbE, PsbF, PsbH, PsbI, PsbJ, PsbK, PsbL, PsbM, PsbT, PsbX, PsbY, PsbZ, Psb30/Ycf12, at least 3 peripheral proteins of the oxygen-evolving complex and a large number of cofactors. It forms dimeric complexes.

It localises to the plastid. The protein resides in the chloroplast thylakoid membrane. Its function is as follows. One of the components of the core complex of photosystem II (PSII). PSII is a light-driven water:plastoquinone oxidoreductase that uses light energy to abstract electrons from H(2)O, generating O(2) and a proton gradient subsequently used for ATP formation. It consists of a core antenna complex that captures photons, and an electron transfer chain that converts photonic excitation into a charge separation. This Piper cenocladum (Ant piper) protein is Photosystem II reaction center protein K.